The sequence spans 461 residues: uncharacterized protein (461 aa).

LRR repeat units follow at residues 119 to 140 (NVKK…EKMS), 141 to 162 (LLEV…QHCK), and 163 to 184 (NLKE…EYLK). An LRRCT domain is found at 197 to 237 (NPCVGEGGQEYRRKVIRVLPNLTKLDDKPVTTTDHQEAIED).

This is an uncharacterized protein from Caenorhabditis elegans.